The chain runs to 1202 residues: QFSIKVMQSSYVGLRSTVQFLQLSQIIWIKSRIAKSENDYINSMKKFLSHKKQNNRKFHTRSMSNGLGSLNLQKRPTPSPTVLNNKFLPTRNQYHSEDINNNILFDIIIKETDKGLKKCVLIGLNLTTNKIFNMEYIDLNTSNRKFKIFVANNLINIKNNGINIDNLYIPKRINSKTLTDLITLSFPNIKVQWYLKSEITNLFLKSDYTNFIKEINERKTLGKSILSKLIIYYNDSSPHCNIGKSSRKVTAISHTKRDIHTSTENNHKKDLFGWHRFNSSNYYDCIDSGALTIEINKLFEYYKDNFTQPFFVVNAKIKFPTGNVRSIGFGNVTTLTDKETLIKTLAIFLEREDIHTVMSYDEGDIDESKFPKGSLSFDFKPLKTIEGTKYANYTFPIKKDIVVKDINKKINFNGLDLPKTMDLSKWPNLKLNKDKTSGEIRMTIKNKNNQSYDIIGHMIINDGENVITFNRAVDNSIIKIFTVTDSMGNTNDPNLFKRIVEEKGNQTVYVYENNETVCVVQDKKFGFISKIAKNKTVNLKSISTLDLETRMDTNNRLIPICMSYYNNKKLNTFLFKDDWQEEMLAAFKTLLKSTNHGKKFYVHNLAHFDSVFILDTLSKLGKIDIIMRDDKIMKLKITFKIPGKNTEYSISFLDSLLMLPNSLDNLSKAFNIENKKSVFPLKFTNGAVTPFNYIGAVPGYEYFYNTPNKKFTKDDYKKYCKDFNNNWDFNKELKNYCEIDCLALHDILTLFAKMIHNEFSVDITRYVSLSSITFAIFRTNFLPENKIPNITCTKLHYILKQAYTGGYCDVFKPEGKNIHSYDINSLYPSAMAKFDMPTGTPLHILGDPYKFTKDPFGFVFAEVTAPDLKVPIIQTRVQTSGGVRTVAPIGTFKGWYLLDELINAKKYGYTFKISEAYLFERLNIFKEYIHRLYTIKSSYTPDDPMYFIAKLLMNSLYGRFGMDPITIKYSVLTPEESEEKLKNSSCIEATTLPSGNVLFKENKPLGEFSNLNTSVPISAAIAAYSRMIMSEYLIKYADNLYAVDTDGIKVDTEIDKKYVSDKELGLMKHEYTFKEAVFVAPKVYGGLFDKPYKNKVEIVKVKGLKEPIQYSDLKDVYIKSLLKLFIILNFLRQLALSTIVIKEQPYSLRVSSFKRVLVFNESGKIISTLPLKLENDKIVSNPHLIVNSEGNPSAFKLSLIKI.

Belongs to the DNA polymerase type-B family.

It is found in the mitochondrion. The enzyme catalyses DNA(n) + a 2'-deoxyribonucleoside 5'-triphosphate = DNA(n+1) + diphosphate. The sequence is that of Probable DNA polymerase from Ascobolus immersus.